We begin with the raw amino-acid sequence, 815 residues long: Cilia- and flagella-associated protein 251 (815 aa).

10 WD repeats span residues 58 to 99 (GHTS…PTRT), 103 to 148 (PHRH…TPPE), 166 to 205 (PAGDVQHSIRFSPNNPAELISNGRRRVYFWSWAPGSPRFQ), 218 to 257 (QSVGDFVSSVFVPGTTQALTATTDGDLVVWDEQGIAAQVG), 271 to 308 (IHNCPITLLATVGDFIVSGGEDGYVRFFDPLLRIVAWF), 379 to 418 (SLLADVVDLAAHPTRAEFAVLGRDGGLQRWDSIAHCLLGG), 420 to 460 (AFER…DLYV), 463 to 502 (NTAAGLVRVAVSNTGKHIAAADENHQLLLYAYLPYKHTMR), 511 to 553 (SHHG…VAAG), and 573 to 612 (SFAPPLAYFQAFAADTHLLVSGADGTVASWDINTAPLERS).

Identified in a spoke-associated complex containing CFAP61, CFAP91 and CFAP251; the complex is associated with the radial spokes in the axoneme. The complex associates with Calmodulin; the association is calcium sensitive.

Its subcellular location is the cytoplasm. It is found in the cytoskeleton. The protein localises to the flagellum axoneme. Functionally, as component of a spoke-associated complex, regulates flagellar dynein activity by mediating regulatory signals between the radial spokes and dynein arms. The sequence is that of Cilia- and flagella-associated protein 251 from Chlamydomonas reinhardtii (Chlamydomonas smithii).